Reading from the N-terminus, the 209-residue chain is Ribosomal RNA large subunit methyltransferase E (209 aa).

S-adenosyl-L-methionine is bound by residues Gly-63, Trp-65, Asp-83, Asp-99, and Asp-124. The Proton acceptor role is filled by Lys-164.

It belongs to the class I-like SAM-binding methyltransferase superfamily. RNA methyltransferase RlmE family.

Its subcellular location is the cytoplasm. The catalysed reaction is uridine(2552) in 23S rRNA + S-adenosyl-L-methionine = 2'-O-methyluridine(2552) in 23S rRNA + S-adenosyl-L-homocysteine + H(+). Functionally, specifically methylates the uridine in position 2552 of 23S rRNA at the 2'-O position of the ribose in the fully assembled 50S ribosomal subunit. In Vibrio campbellii (strain ATCC BAA-1116), this protein is Ribosomal RNA large subunit methyltransferase E.